Here is a 404-residue protein sequence, read N- to C-terminus: Ubiquitin-like modifier-activating enzyme 5 (404 aa).

Positions 83, 104, 127, 150, and 184 each coordinate ATP. Zn(2+) is bound by residues C226 and C229. The active-site Glycyl thioester intermediate is the C250. Zn(2+) contacts are provided by C303 and C308. Residues 372–393 form a disordered region; the sequence is APEKSSETSEETVTAATADETS. Positions 382-391 are enriched in low complexity; it reads ETVTAATADE.

It belongs to the ubiquitin-activating E1 family. UBA5 subfamily.

Functionally, E1-like enzyme which activates UFM1. The sequence is that of Ubiquitin-like modifier-activating enzyme 5 from Drosophila simulans (Fruit fly).